A 240-amino-acid polypeptide reads, in one-letter code: Large ribosomal subunit protein uL2 (240 aa).

Residues 1-10 (MGHRISTQSR) are compositionally biased toward polar residues. Disordered stretches follow at residues 1–20 (MGHR…YRAP) and 204–240 (FGGG…GYRR).

This sequence belongs to the universal ribosomal protein uL2 family. In terms of assembly, part of the 50S ribosomal subunit. Forms a bridge to the 30S subunit in the 70S ribosome.

In terms of biological role, one of the primary rRNA binding proteins. Required for association of the 30S and 50S subunits to form the 70S ribosome, for tRNA binding and peptide bond formation. It has been suggested to have peptidyltransferase activity; this is somewhat controversial. Makes several contacts with the 16S rRNA in the 70S ribosome. This Methanocorpusculum labreanum (strain ATCC 43576 / DSM 4855 / Z) protein is Large ribosomal subunit protein uL2.